A 353-amino-acid polypeptide reads, in one-letter code: ATP-dependent kinase YFH7 (353 aa).

ATP is bound at residue glycine 31–threonine 39.

It belongs to the YFH7 family.

Functionally, ATP-dependent kinase that could be involved in endoplasmic reticulum membrane assembly. The sequence is that of ATP-dependent kinase YFH7 (YFH7) from Saccharomyces cerevisiae (strain RM11-1a) (Baker's yeast).